The following is a 356-amino-acid chain: tRNA N6-adenosine threonylcarbamoyltransferase (356 aa).

Positions 131 and 135 each coordinate Fe cation. Substrate is bound by residues 154-158, Asp-187, Gly-200, and Asn-289; that span reads LVSGG. Asp-317 lines the Fe cation pocket.

It belongs to the KAE1 / TsaD family. The cofactor is Fe(2+).

Its subcellular location is the cytoplasm. It catalyses the reaction L-threonylcarbamoyladenylate + adenosine(37) in tRNA = N(6)-L-threonylcarbamoyladenosine(37) in tRNA + AMP + H(+). Functionally, required for the formation of a threonylcarbamoyl group on adenosine at position 37 (t(6)A37) in tRNAs that read codons beginning with adenine. Is involved in the transfer of the threonylcarbamoyl moiety of threonylcarbamoyl-AMP (TC-AMP) to the N6 group of A37, together with TsaE and TsaB. TsaD likely plays a direct catalytic role in this reaction. The protein is tRNA N6-adenosine threonylcarbamoyltransferase of Ruthia magnifica subsp. Calyptogena magnifica.